A 421-amino-acid chain; its full sequence is ATP-dependent RNA helicase RhlB (421 aa).

The Q motif signature appears at 9–37; that stretch reads QKFSDFALHAKVIEALENKGFHYCTPIQA. A Helicase ATP-binding domain is found at 40-219; it reads LPLTLAGRDV…FEQMNNAEYV (180 aa). 53–60 contacts ATP; that stretch reads AQTGTGKT. The DEAD box signature appears at 165–168; that stretch reads DEAD. The Helicase C-terminal domain occupies 245-390; that stretch reads RLLQTLIEEE…QSKYNPDALL (146 aa). Residues 386–421 are disordered; it reads PDALLSELPPPKRLTRARSGNGPRRTGAPRNRRRPG. Residues 405–414 are compositionally biased toward low complexity; the sequence is GNGPRRTGAP.

Belongs to the DEAD box helicase family. RhlB subfamily. Component of the RNA degradosome, which is a multiprotein complex involved in RNA processing and mRNA degradation.

It localises to the cytoplasm. It carries out the reaction ATP + H2O = ADP + phosphate + H(+). In terms of biological role, DEAD-box RNA helicase involved in RNA degradation. Has RNA-dependent ATPase activity and unwinds double-stranded RNA. This Enterobacter sp. (strain 638) protein is ATP-dependent RNA helicase RhlB.